The chain runs to 387 residues: Beta-carotene 4-ketolase (387 aa).

Positions 1–78 are disordered; that stretch reads MPHSIDMEDS…GNPTVDDASQ (78 aa). Polar residues-rich tracts occupy residues 43-53 and 65-78; these read NWQTQYHSSEG and DATT…DASQ.

The enzyme catalyses echinenone + 2 AH2 + 2 O2 = canthaxanthin + 2 A + 3 H2O. It catalyses the reaction all-trans-beta-carotene + 2 AH2 + 2 O2 = echinenone + 2 A + 3 H2O. It functions in the pathway carotenoid biosynthesis. In terms of biological role, involved in the biosynthesis of ketocarotenoids which are powerful anti-oxidative molecules. Catalyzes the conversion of beta-carotene to canthaxanthin via echinenone. This Protosiphon botryoides (Green alga) protein is Beta-carotene 4-ketolase.